The primary structure comprises 830 residues: MSGAYRGRGFGRGRFQNWKRGRGGGNFSGRWRDRTDLSKAAGNHASEQASQPLLQQSTLDQFIPYKGWKLYFSEVYSNNSPLTEKIQAFEKFFTRHIDLYDKDEIERKGSILVDFKELTKDNEITNLIPDIENALRDAPEKTLACMGLAIHQVLTKDLERHAAELQAQEGLCNGGGTMVNVPHIYARVYNYEPLTHLKNIRATCYGKYISIRGTVVRVSNIKPLCTKMAFQCAACGEIQSFPLPDGKYNLPTKCPVPACRGRSFTPLRSSPLTVTMDWQLIKIQELMSDAQREAGRIPRTIECELVHDLVDSCVPGDTVTVTGIVKVSNSEEGSRSKNDKCMFLLYIEANSVSNSKGQKAQTAEDGCKHGTLMEFSLKDLYAIQEIQAEENLLKLIVNSLCPVIFGHELVKAGLMLALFGGSQKYADDKNRIPIRGDPHVLIVGDPGLGKSQMLQAACNVAPRGVYVCGNTATSSGLTVTLSKDSSSGDFALEAGALVLGDQGICGIDEFDKMGNQHQALLEAMEQQSISLAKAGVVCSLPARTSIIAAANPVGGHYNKARTVSENLKMGSALLSRFDLVFILLDTPNEQHDHLLSEHVIAIRAGKQRAVSSATVSRVLSQDSNTSVLEVVSEKPLSERLKVAPGEKTDPIPHQLLRKYIGYARQYVHPRLSTEAAQALQDFYLELRKQSQRVGSSPITTRQLESLIRLTEARARLELREEATKEDAEDIIEIMKHSMLGTYSDEFGNLDFERSQHGSGMSNRSTAKRFISALNSIAERTYNNIFQFHQLRQIAKELNIQVADFENFIGSLNDQGYLLKKGPKIYQLQTM.

The MCM domain occupies 392 to 599; sequence LLKLIVNSLC…QHDHLLSEHV (208 aa). 444-451 contacts ATP; it reads GDPGLGKS. Residue S620 is modified to Phosphoserine.

This sequence belongs to the MCM family. Component of the MCM8-MCM9 complex, which forms a hexamer composed of MCM8 and MCM9. Interacts with the DNA mismatch repair (MMR) complex composed at least of MSH2, MSH3, MSH6, PMS1 and MLH1. Interacts with RAD51; the interaction recruits RAD51 to DNA damage sites. Interacts with the MRN complex composed of MRE11, RAD50 and NBN/NBS1. Interacts with CDC6 and ORC2. Interacts with HROB; the interaction recruits the MCM8-MCM9 complex to DNA damage sites.

The protein resides in the nucleus. It is found in the chromosome. The catalysed reaction is ATP + H2O = ADP + phosphate + H(+). In terms of biological role, component of the MCM8-MCM9 complex, a complex involved in the repair of double-stranded DNA breaks (DBSs) and DNA interstrand cross-links (ICLs) by homologous recombination (HR). Required for DNA resection by the MRE11-RAD50-NBN/NBS1 (MRN) complex by recruiting the MRN complex to the repair site and by promoting the complex nuclease activity. Probably by regulating the localization of the MNR complex, indirectly regulates the recruitment of downstream effector RAD51 to DNA damage sites including DBSs and ICLs. The MCM8-MCM9 complex is dispensable for DNA replication and S phase progression. However, may play a non-essential for DNA replication: may be involved in the activation of the prereplicative complex (pre-RC) during G(1) phase by recruiting CDC6 to the origin recognition complex (ORC). Probably by regulating HR, plays a key role during gametogenesis. Stabilizes MCM9 protein. This Rattus norvegicus (Rat) protein is DNA helicase MCM8 (Mcm8).